We begin with the raw amino-acid sequence, 295 residues long: Light-independent protochlorophyllide reductase iron-sulfur ATP-binding protein (295 aa).

ATP-binding positions include 39–44 (GIGKST) and Lys-68. Residue Ser-43 participates in Mg(2+) binding. The [4Fe-4S] cluster site is built by Cys-124 and Cys-158. 209-210 (NR) serves as a coordination point for ATP.

The protein belongs to the NifH/BchL/ChlL family. As to quaternary structure, homodimer. Protochlorophyllide reductase is composed of three subunits; ChlL, ChlN and ChlB. The cofactor is [4Fe-4S] cluster.

It catalyses the reaction chlorophyllide a + oxidized 2[4Fe-4S]-[ferredoxin] + 2 ADP + 2 phosphate = protochlorophyllide a + reduced 2[4Fe-4S]-[ferredoxin] + 2 ATP + 2 H2O. The protein operates within porphyrin-containing compound metabolism; chlorophyll biosynthesis (light-independent). Component of the dark-operative protochlorophyllide reductase (DPOR) that uses Mg-ATP and reduced ferredoxin to reduce ring D of protochlorophyllide (Pchlide) to form chlorophyllide a (Chlide). This reaction is light-independent. The L component serves as a unique electron donor to the NB-component of the complex, and binds Mg-ATP. This Prochlorococcus marinus (strain MIT 9312) protein is Light-independent protochlorophyllide reductase iron-sulfur ATP-binding protein.